Consider the following 406-residue polypeptide: 5-hydroxytryptamine receptor 4 (406 aa).

Over 1 to 19 the chain is Extracellular; it reads MDRLDANVSSNEGFGSVEK. The N-linked (GlcNAc...) asparagine glycan is linked to Asn7. Residues 20 to 44 traverse the membrane as a helical segment; that stretch reads VVLLTFFAMVILMAILGNLLVMVAV. The Cytoplasmic segment spans residues 45–54; that stretch reads CRDRQLRKIK. A helical transmembrane segment spans residues 55 to 78; that stretch reads TNYFIVSLAFADLLVSVLVNAFGA. The Extracellular segment spans residues 79–92; it reads IELVQDIWFYGEMF. The helical transmembrane segment at 93–117 threads the bilayer; that stretch reads CLVRTSLDVLLTTASIFHLCCISLD. Cys93 and Cys184 are joined by a disulfide. A serotonin-binding site is contributed by Asp100. At 118–133 the chain is on the cytoplasmic side; sequence RYYAICCQPLVYRNKM. A helical membrane pass occupies residues 134–157; that stretch reads TPLRIALMLGGCWVIPMFISFLPI. Over 158–188 the chain is Extracellular; the sequence is MQGWNNIGIVDVIEKRKFNHNSNSTFCVFMV. A helical membrane pass occupies residues 189-212; it reads NKPYAITCSVVAFYIPFLLMVLAY. At 213–257 the chain is on the cytoplasmic side; it reads YRIYVTAKEHAQQIQMLQRAGATSESRPQTADQHSTHRMRTETKA. Residues 258–283 traverse the membrane as a helical segment; the sequence is AKTLCVIMGCFCFCWAPFFVTNIVDP. Asn279 contacts serotonin. Topologically, residues 284–290 are extracellular; that stretch reads FIDYTVP. The chain crosses the membrane as a helical span at residues 291–314; the sequence is EKVWTAFLWLGYINSGLNPFLYAF. Topologically, residues 315 to 406 are cytoplasmic; sequence LNKSFRRAFL…DSCSLKRSQS (92 aa).

It belongs to the G-protein coupled receptor 1 family. In terms of assembly, interacts (via C-terminus 330-346 AA) with GRK5; this interaction is promoted by 5-HT (serotonin). As to expression, in brain, isoform 5-HT4S is restricted to the striatum. In peripheral tissues, differential expression is also observed in the atrium of the heart where only isoform 5-HT4S is detectable. In brain, isoform 5-HT4L is expressed throughout the brain, except in the cerebellum.

The protein resides in the cell membrane. It is found in the endosome membrane. Its function is as follows. G-protein coupled receptor for 5-hydroxytryptamine (serotonin), a biogenic hormone that functions as a neurotransmitter, a hormone and a mitogen. Ligand binding causes a conformation change that triggers signaling via guanine nucleotide-binding proteins (G proteins) and modulates the activity of downstream effectors. HTR4 is coupled to G(s) G alpha proteins and mediates activation of adenylate cyclase activity. The chain is 5-hydroxytryptamine receptor 4 (Htr4) from Rattus norvegicus (Rat).